We begin with the raw amino-acid sequence, 469 residues long: Zinc finger CCCH domain-containing protein 30 (469 aa).

A C3H1-type zinc finger spans residues V415 to S443. Residues A444–N469 are disordered. The span at D449 to R458 shows a compositional bias: basic residues.

The polypeptide is Zinc finger CCCH domain-containing protein 30 (Oryza sativa subsp. japonica (Rice)).